The following is a 1894-amino-acid chain: Plexin-A4 (1894 aa).

Positions 1-23 (MKAMPWNWTCLLSHLLMVGMGSS) are cleaved as a signal peptide. Positions 24–507 (TLLTRQPAPL…SERQLTRVPV (484 aa)) constitute a Sema domain. Residues 24-1237 (TLLTRQPAPL…IAPDSPLSLP (1214 aa)) are Extracellular-facing. 10 disulfide bridges follow: C95–C104, C130–C138, C284–C405, C300–C356, C374–C393, C510–C527, C516–C558, C519–C536, C530–C542, and C593–C612. The PSI 1 domain maps to 509–559 (SCGQYQSCGECLGSGDPHCGWCVLHNTCTRKERCERSKEPRRFASEMKQCV). An N-linked (GlcNAc...) asparagine glycan is attached at N655. PSI domains follow at residues 655-702 (NCSV…EDCP) and 803-856 (KCGA…SKCT). IPT/TIG domains follow at residues 858–952 (PRIT…YYFM), 954–1037 (LTLS…FQYV), 1040–1139 (PTIV…FTYY), and 1142–1230 (PVFE…YIAP). N1007, N1132, and N1180 each carry an N-linked (GlcNAc...) asparagine glycan. A helical transmembrane segment spans residues 1238–1258 (AIVSIAVAGGLLIIFIVAVLI). Topologically, residues 1259 to 1894 (AYKRKSRESD…QVITLMSLDS (636 aa)) are cytoplasmic. The residue at position 1350 (K1350) is an N6-acetyllysine.

Belongs to the plexin family. Interacts with NRP1 and NRP2.

It localises to the cell membrane. Functionally, coreceptor for SEMA3A. Necessary for signaling by class 3 semaphorins and subsequent remodeling of the cytoskeleton. Plays a role in axon guidance in the developing nervous system. Class 3 semaphorins bind to a complex composed of a neuropilin and a plexin. The plexin modulates the affinity of the complex for specific semaphorins, and its cytoplasmic domain is required for the activation of down-stream signaling events in the cytoplasm. This Homo sapiens (Human) protein is Plexin-A4 (PLXNA4).